The primary structure comprises 424 residues: Glutamate-1-semialdehyde 2,1-aminomutase (424 aa).

The residue at position 263 (K263) is an N6-(pyridoxal phosphate)lysine.

This sequence belongs to the class-III pyridoxal-phosphate-dependent aminotransferase family. HemL subfamily. As to quaternary structure, homodimer. Pyridoxal 5'-phosphate is required as a cofactor.

The protein localises to the cytoplasm. The enzyme catalyses (S)-4-amino-5-oxopentanoate = 5-aminolevulinate. It participates in porphyrin-containing compound metabolism; protoporphyrin-IX biosynthesis; 5-aminolevulinate from L-glutamyl-tRNA(Glu): step 2/2. In Campylobacter jejuni subsp. jejuni serotype O:6 (strain 81116 / NCTC 11828), this protein is Glutamate-1-semialdehyde 2,1-aminomutase.